Consider the following 171-residue polypeptide: Mitoferrin-1 (171 aa).

The interval Met-1–Pro-40 is disordered. One copy of the Solcar repeat lies at Ala-43–Thr-131. 3 helical membrane-spanning segments follow: residues Leu-45 to Tyr-64, Arg-105 to Tyr-125, and His-143 to Asp-163.

It belongs to the mitochondrial carrier (TC 2.A.29) family. As to quaternary structure, interacts with ACB10; this interaction stabilizes SLC25A37 and enhances the function of SLC25A37 to import mitochondrial iron during erythroid differentiation.

It is found in the mitochondrion inner membrane. The enzyme catalyses Fe(2+)(in) = Fe(2+)(out). Mitochondrial iron transporter that specifically mediates iron uptake in developing erythroid cells, thereby playing an essential role in heme biosynthesis. This Bos taurus (Bovine) protein is Mitoferrin-1 (SLC25A37).